The primary structure comprises 100 residues: UPF0213 protein YhbQ (100 aa).

Residues 2–77 (TPWYLYLIRT…KQLTKRQKER (76 aa)) form the GIY-YIG domain.

It belongs to the UPF0213 family.

In Salmonella choleraesuis (strain SC-B67), this protein is UPF0213 protein YhbQ.